A 398-amino-acid chain; its full sequence is 1-deoxy-D-xylulose 5-phosphate reductoisomerase (398 aa).

NADPH-binding residues include T14, G15, S16, I17, Q42, and N128. K129 serves as a coordination point for 1-deoxy-D-xylulose 5-phosphate. An NADPH-binding site is contributed by E130. D154 contributes to the Mn(2+) binding site. 4 residues coordinate 1-deoxy-D-xylulose 5-phosphate: S155, E156, S185, and H208. Residue E156 participates in Mn(2+) binding. Residue G214 coordinates NADPH. The 1-deoxy-D-xylulose 5-phosphate site is built by S221, N226, K227, and E230. Residue E230 coordinates Mn(2+).

This sequence belongs to the DXR family. The cofactor is Mg(2+). Requires Mn(2+) as cofactor.

The catalysed reaction is 2-C-methyl-D-erythritol 4-phosphate + NADP(+) = 1-deoxy-D-xylulose 5-phosphate + NADPH + H(+). Its pathway is isoprenoid biosynthesis; isopentenyl diphosphate biosynthesis via DXP pathway; isopentenyl diphosphate from 1-deoxy-D-xylulose 5-phosphate: step 1/6. Its function is as follows. Catalyzes the NADPH-dependent rearrangement and reduction of 1-deoxy-D-xylulose-5-phosphate (DXP) to 2-C-methyl-D-erythritol 4-phosphate (MEP). The sequence is that of 1-deoxy-D-xylulose 5-phosphate reductoisomerase from Dechloromonas aromatica (strain RCB).